We begin with the raw amino-acid sequence, 238 residues long: 3,4-dihydroxy-2-butanone 4-phosphate synthase (238 aa).

D-ribulose 5-phosphate is bound by residues 26–27 (RE), D31, 166–170 (RVGQT), and E190. E27 lines the Mg(2+) pocket.

This sequence belongs to the DHBP synthase family. Homodimer. Requires Mg(2+) as cofactor. Mn(2+) is required as a cofactor.

The enzyme catalyses D-ribulose 5-phosphate = (2S)-2-hydroxy-3-oxobutyl phosphate + formate + H(+). The protein operates within cofactor biosynthesis; riboflavin biosynthesis; 2-hydroxy-3-oxobutyl phosphate from D-ribulose 5-phosphate: step 1/1. Its function is as follows. Catalyzes the conversion of D-ribulose 5-phosphate to formate and 3,4-dihydroxy-2-butanone 4-phosphate. This Archaeoglobus fulgidus (strain ATCC 49558 / DSM 4304 / JCM 9628 / NBRC 100126 / VC-16) protein is 3,4-dihydroxy-2-butanone 4-phosphate synthase.